Reading from the N-terminus, the 906-residue chain is Coatomer subunit beta' (906 aa).

WD repeat units lie at residues 13–52 (ARSD…LVKT), 55–94 (VCDL…RVHM), 97–136 (AHSD…SCSQ), 140–180 (GHTH…PNFT), 183–224 (GHEK…CVQT), and 227–266 (GHAQ…LEST). The residue at position 627 (K627) is an N6-acetyllysine. The interval 837 to 870 (EEGKDFQPSRSTAQQELDGKPASPTPVIVASHTA) is disordered. S859 bears the Phosphoserine mark. Residue T861 is modified to Phosphothreonine. Positions 866–891 (ASHTANKEEKSLLELEVDLDNLELED) form a coiled coil.

It belongs to the WD repeat COPB2 family. Oligomeric complex that consists of at least the alpha, beta, beta', gamma, delta, epsilon and zeta subunits. Probably interacts with PEX11A. Interacts with SCYL1. Interacts with JAGN1.

The protein localises to the cytoplasm. Its subcellular location is the cytosol. The protein resides in the golgi apparatus membrane. It localises to the cytoplasmic vesicle. It is found in the COPI-coated vesicle membrane. Its function is as follows. The coatomer is a cytosolic protein complex that binds to dilysine motifs and reversibly associates with Golgi non-clathrin-coated vesicles, which further mediate biosynthetic protein transport from the ER, via the Golgi up to the trans Golgi network. Coatomer complex is required for budding from Golgi membranes, and is essential for the retrograde Golgi-to-ER transport of dilysine-tagged proteins. In mammals, the coatomer can only be recruited by membranes associated to ADP-ribosylation factors (ARFs), which are small GTP-binding proteins; the complex also influences the Golgi structural integrity, as well as the processing, activity, and endocytic recycling of LDL receptors. This coatomer complex protein, essential for Golgi budding and vesicular trafficking, is a selective binding protein (RACK) for protein kinase C, epsilon type. It binds to Golgi membranes in a GTP-dependent manner. The protein is Coatomer subunit beta' (COPB2) of Homo sapiens (Human).